The chain runs to 373 residues: Protodeoxyviolaceinate monooxygenase (373 aa).

2–20 (KILVIGAGPAGLVFASQLK) contributes to the FAD binding site.

Requires FAD as cofactor.

It catalyses the reaction protodeoxyviolaceinate + NADH + O2 + H(+) = protoviolaceinate + NAD(+) + H2O. The catalysed reaction is protodeoxyviolaceinate + NADPH + O2 + H(+) = protoviolaceinate + NADP(+) + H2O. It functions in the pathway pigment biosynthesis; violacein biosynthesis. In terms of biological role, catalyzes the oxygenation of the 6-position of protodeoxyviolaceinate to form proviolacein. This is Protodeoxyviolaceinate monooxygenase (vioD) from Chromobacterium violaceum (strain ATCC 12472 / DSM 30191 / JCM 1249 / CCUG 213 / NBRC 12614 / NCIMB 9131 / NCTC 9757 / MK).